The chain runs to 235 residues: Putative HAD-hydrolase YfnB (235 aa).

Asp10 acts as the Nucleophile in catalysis.

It belongs to the HAD-like hydrolase superfamily. YjjG family.

This chain is Putative HAD-hydrolase YfnB (yfnB), found in Bacillus subtilis (strain 168).